Consider the following 534-residue polypeptide: Blue-light-activated protein (534 aa).

The PAS domain maps to 20–93 (GKDIFFAAVE…QSIRDAIDQR (74 aa)). The residue at position 70 (C70) is an S-4a-FMN cysteine. Residues 94–148 (VDISTEILNYRKDGSSFWNALFISPVYNDAGELIYFFASQLDISRRRDAEEALRQ) form the PAC domain. The region spanning 161–390 (GIAHDFNNLL…TLRLYFPVDE (230 aa)) is the Histidine kinase domain. Position 164 is a phosphohistidine; by autocatalysis (H164). Residues 411–527 (RILIVEDRPD…DLARKVRQVL (117 aa)) form the Response regulatory domain. At D461 the chain carries 4-aspartylphosphate.

Post-translationally, FMN binds covalently to cysteine after exposure to blue light and this bond is spontaneously broken in the dark.

It catalyses the reaction ATP + protein L-histidine = ADP + protein N-phospho-L-histidine.. Functionally, photosensitive kinase and response regulator that is involved in increased bacterial virulence upon exposure to light. In Pseudomonas syringae pv. syringae (strain B728a), this protein is Blue-light-activated protein.